Consider the following 942-residue polypeptide: DNA polymerase I (942 aa).

The 93-residue stretch at glutamate 177 to aspartate 269 folds into the 5'-3' exonuclease domain. Positions threonine 340–glutamate 522 constitute a 3'-5' exonuclease domain.

It belongs to the DNA polymerase type-A family. Single-chain monomer with multiple functions.

The enzyme catalyses DNA(n) + a 2'-deoxyribonucleoside 5'-triphosphate = DNA(n+1) + diphosphate. In addition to polymerase activity, this DNA polymerase exhibits 3'-5' and 5'-3' exonuclease activity. The chain is DNA polymerase I (polA) from Chloroflexus aurantiacus (strain ATCC 29366 / DSM 635 / J-10-fl).